A 386-amino-acid chain; its full sequence is TRIBOA-glucoside O-methyltransferase BX7 (386 aa).

4 residues coordinate S-adenosyl-L-methionine: Gly-224, Asp-248, Met-270, and Lys-283. Catalysis depends on His-287, which acts as the Proton acceptor.

The protein belongs to the class I-like SAM-binding methyltransferase superfamily. Cation-independent O-methyltransferase family. COMT subfamily. Expressed in seedlings and newly formed crown roots. Highest expression in the scutellar node. Low to non detectable levels in cob, tassel and mature organs like husk or leaves.

The enzyme catalyses TRIBOA beta-D-glucoside + S-adenosyl-L-methionine = DIMBOA beta-D-glucoside + S-adenosyl-L-homocysteine + H(+). Its function is as follows. O-methyltransferase involved in the benzoxazinoid glucoside biosynthesis. Can use 2,4,7-trihydroxy-2H-1,4-benzoxazin-3(4H)-one 2-D-glucoside (TRIBOA-glucoside) as substrate, but not aglucone TRIBOA, caffeic acid, ferulic acid, apigenin or quercetin. In Zea mays (Maize), this protein is TRIBOA-glucoside O-methyltransferase BX7 (BX7).